Consider the following 255-residue polypeptide: Polycomb group RING finger protein 5 (255 aa).

An RING-type zinc finger spans residues Cys-18 to Gly-57. The interval Trp-97–His-132 is disordered. The segment covering Asp-109–Asp-119 has biased composition (basic and acidic residues).

As to quaternary structure, component of a PRC1-like complex that contains PCGF5, RNF2 and UBE2D3. Interacts with RNF2; the interaction is direct. Interacts with CBX6, CBX7 and CBX8. Interacts with AUTS2; the interaction is direct. Identified in a complex that contains AUTS2, PCGF5, CSNK2B and RNF2.

It localises to the nucleus. The protein localises to the nucleoplasm. Its function is as follows. Component of a Polycomb group (PcG) multiprotein PRC1-like complex, a complex class required to maintain the transcriptionally repressive state of many genes, including Hox genes, throughout development. PcG PRC1 complex acts via chromatin remodeling and modification of histones; it mediates monoubiquitination of histone H2A 'Lys-119', rendering chromatin heritably changed in its expressibility. Within the PRC1-like complex, regulates RNF2 ubiquitin ligase activity. Plays a redundant role with PCGF3 as part of a PRC1-like complex that mediates monoubiquitination of histone H2A 'Lys-119' on the X chromosome and is required for normal silencing of one copy of the X chromosome in XX females. This Bos taurus (Bovine) protein is Polycomb group RING finger protein 5 (PCGF5).